A 190-amino-acid chain; its full sequence is Myosin, light chain 1, alkali; skeletal, fast (190 aa).

A compositionally biased stretch (basic and acidic residues) spans 1–17 (MAPKKDAKKPEPPKKAE). A disordered region spans residues 1–33 (MAPKKDAKKPEPPKKAEPAPAPAPAPEPPKADA). Positions 19–28 (APAPAPAPEP) are enriched in pro residues. EF-hand domains lie at 46–81 (DQME…LGQN) and 123–158 (ATYD…LGEK).

Myosin is a hexamer of 2 heavy chains and 4 light chains. Does not bind calcium. Expressed in fast muscle fibers during skeletal muscle differentiation.

In terms of biological role, non-regulatory myosin light chain required for proper formation and/or maintenance of myofibers, and thus appropriate muscle function. In Danio rerio (Zebrafish), this protein is Myosin, light chain 1, alkali; skeletal, fast.